The primary structure comprises 323 residues: rRNA 2'-O-methyltransferase fibrillarin (323 aa).

The tract at residues 1-80 (MSFRPGSRGG…GARGGAKGGA (80 aa)) is disordered. Over residues 7-78 (SRGGARGGRG…RGGARGGAKG (72 aa)) the composition is skewed to gly residues. Asymmetric dimethylarginine occurs at positions 8, 12, 15, 19, 25, 29, 35, 39, 43, 49, 53, 57, 61, 65, 69, and 73. Residues 175 to 176 (TS), 194 to 195 (EF), 219 to 220 (DA), and 239 to 242 (DVAQ) contribute to the S-adenosyl-L-methionine site.

It belongs to the methyltransferase superfamily. Fibrillarin family. In terms of assembly, component of box C/D small nucleolar ribonucleoprotein (snoRNP) particles that contain SNU13, NOP1, SIK1/NOP56 and NOP58, plus a guide RNA. In terms of processing, by homology to other fibrillarins, some or all of the N-terminal domain arginines are modified to asymmetric dimethylarginine (DMA).

Its subcellular location is the nucleus. It localises to the nucleolus. It carries out the reaction L-glutaminyl-[histone H2A] + S-adenosyl-L-methionine = N(5)-methyl-L-glutaminyl-[histone H2A] + S-adenosyl-L-homocysteine + H(+). S-adenosyl-L-methionine-dependent methyltransferase that has the ability to methylate both RNAs and proteins. Involved in pre-rRNA processing. Utilizes the methyl donor S-adenosyl-L-methionine to catalyze the site-specific 2'-hydroxyl methylation of ribose moieties in pre-ribosomal RNA. Site specificity is provided by a guide RNA that base pairs with the substrate. Methylation occurs at a characteristic distance from the sequence involved in base pairing with the guide RNA. Also acts as a protein methyltransferase by mediating methylation of 'Gln-105' of histone H2A (H2AQ105me), a modification that impairs binding of the FACT complex and is specifically present at 35S ribosomal DNA locus. In Candida glabrata (strain ATCC 2001 / BCRC 20586 / JCM 3761 / NBRC 0622 / NRRL Y-65 / CBS 138) (Yeast), this protein is rRNA 2'-O-methyltransferase fibrillarin (NOP1).